Consider the following 159-residue polypeptide: Ribosomal RNA large subunit methyltransferase H (159 aa).

Residues L76, G108, and 127 to 132 contribute to the S-adenosyl-L-methionine site; that span reads FGLLTL.

The protein belongs to the RNA methyltransferase RlmH family. Homodimer.

It is found in the cytoplasm. It carries out the reaction pseudouridine(1915) in 23S rRNA + S-adenosyl-L-methionine = N(3)-methylpseudouridine(1915) in 23S rRNA + S-adenosyl-L-homocysteine + H(+). Functionally, specifically methylates the pseudouridine at position 1915 (m3Psi1915) in 23S rRNA. In Leuconostoc citreum (strain KM20), this protein is Ribosomal RNA large subunit methyltransferase H.